We begin with the raw amino-acid sequence, 1893 residues long: Transcription initiation factor TFIID subunit 1 (1893 aa).

In terms of domain architecture, Protein kinase 1 spans 1 to 435 (MGPGCDLLLR…VTQLHWEDDI (435 aa)). Position 137 is a phosphoserine; by autocatalysis (S137). Disordered stretches follow at residues 155-184 (LMPP…NGEG) and 197-224 (ASEK…AESE). Pro residues predominate over residues 156–165 (MPPPPPPPGP). Low complexity predominate over residues 197-208 (ASEKVDFSSSSD). Position 328 is a phosphoserine; by autocatalysis (S328). A disordered region spans residues 534 to 557 (IPDEKEEATSNSPSKESKKESSLK). A histone acetyltransferase (HAT) region spans residues 538–997 (KEEATSNSPS…KIPNKPTQQK (460 aa)). K565 carries the N6-acetyllysine modification. Residues K570 and K583 each participate in a glycyl lysine isopeptide (Lys-Gly) (interchain with G-Cter in SUMO2) cross-link. Disordered stretches follow at residues 990 to 1009 (PNKP…KKTV), 1128 to 1148 (MLQN…QERK), 1158 to 1177 (GSAA…VTSL), and 1254 to 1278 (RLKR…MKER). 2 stretches are compositionally biased toward basic and acidic residues: residues 995–1004 (QQKDDKEPQP) and 1139–1148 (SREREEQERK). The segment at residues 1216–1294 (VRIRTTKDEE…CGACGAIGHM (79 aa)) is a DNA-binding region (HMG box; involved in promoter binding). Residues 1254 to 1270 (RLKRNQEKEKLKGPPEK) are compositionally biased toward basic and acidic residues. Residues 1363–1650 (VLKFPKQQLP…TAKEAALEEA (288 aa)) form an interaction with ASF1A and ASF1B region. The short motif at 1372-1379 (PPKKKRRV) is the Nuclear localization signal element. Bromo domains follow at residues 1397–1505 (RRRT…LKEK) and 1519–1628 (LLDD…LTEY). The Protein kinase 2 domain occupies 1446 to 1893 (MDLQTLRENV…AGDSDLDSDE (448 aa)). The interval 1651–1676 (ELESLDPMTPGPYTPQPPDLYDTNTS) is disordered. Residues 1659-1668 (TPGPYTPQPP) show a composition bias toward pro residues. S1690, S1693, A1718, E1721, and G1723 each carry phosphoserine. The disordered stretch occupies residues 1696 to 1893 (DIPSATPEKQ…AGDSDLDSDE (198 aa)). Composition is skewed to acidic residues over residues 1709–1723 (EGED…EEEG) and 1741–1756 (EGED…EEGD). 3 positions are modified to phosphoserine: S1799, S1802, and S1820. The segment covering 1830–1840 (KSNTQDTSFSS) has biased composition (polar residues). Residues 1846–1857 (VSEEEEDEEEEE) show a composition bias toward acidic residues. S1847 is modified (phosphoserine). Residues 1860 to 1869 (SGPSVLSQVH) are compositionally biased toward polar residues.

Belongs to the TAF1 family. In terms of assembly, component of the TFIID basal transcription factor complex, composed of TATA-box-binding protein TBP, and a number of TBP-associated factors (TAFs), including TAF1, TAF2, TAF3, TAF4, TAF5, TAF6, TAF7, TAF8, TAF9, TAF10, TAF11, TAF12 and TAF13. Interacts with TAF7; the interaction is direct. TAF1, when part of the TFIID complex, interacts with C-terminus of TP53. Part of a TFIID-containing RNA polymerase II pre-initiation complex that is composed of TBP and at least GTF2A1, GTF2A2, GTF2E1, GTF2E2, GTF2F1, GTF2H2, GTF2H3, GTF2H4, GTF2H5, GTF2B, TCEA1, ERCC2, ERCC3, TAF1, TAF2, TAF3, TAF4, TAF5, TAF6, TAF7, TAF8, TAF9, TAF10, TAF11, TAF12 and TAF13. Component of some MLL1/MLL complex, at least composed of the core components KMT2A/MLL1, ASH2L, HCFC1/HCF1, WDR5 and RBBP5, as well as the facultative components BACC1, CHD8, E2F6, HSP70, INO80C, KANSL1, LAS1L, MAX, MCRS1, MGA, KAT8/MOF, PELP1, PHF20, PRP31, RING2, RUVB1/TIP49A, RUVB2/TIP49B, SENP3, TAF1, TAF4, TAF6, TAF7, TAF9 and TEX10. RB1 interacts with the N-terminal domain of TAF1. Interacts with ASF1A and ASF1B. Interacts (via bromo domains) with acetylated lysine residues on the N-terminus of histone H1.4, H2A, H2B, H3 and H4 (in vitro). As to quaternary structure, (Microbial infection) Interacts with SV40 Large T antigen. (Microbial infection) Interacts with herpes simplex virus 1 ICP4. The cofactor is Mg(2+). In terms of processing, phosphorylated by casein kinase II in vitro.

It is found in the nucleus. The catalysed reaction is L-seryl-[protein] + ATP = O-phospho-L-seryl-[protein] + ADP + H(+). The enzyme catalyses L-threonyl-[protein] + ATP = O-phospho-L-threonyl-[protein] + ADP + H(+). It catalyses the reaction L-lysyl-[protein] + acetyl-CoA = N(6)-acetyl-L-lysyl-[protein] + CoA + H(+). Autophosphorylates on Ser residues. Inhibited by retinoblastoma tumor suppressor protein, RB1. Binding to TAF7 or CIITA inhibits the histone acetyltransferase activity. Its function is as follows. The TFIID basal transcription factor complex plays a major role in the initiation of RNA polymerase II (Pol II)-dependent transcription. TFIID recognizes and binds promoters with or without a TATA box via its subunit TBP, a TATA-box-binding protein, and promotes assembly of the pre-initiation complex (PIC). The TFIID complex consists of TBP and TBP-associated factors (TAFs), including TAF1, TAF2, TAF3, TAF4, TAF5, TAF6, TAF7, TAF8, TAF9, TAF10, TAF11, TAF12 and TAF13. TAF1 is the largest component and core scaffold of the TFIID complex, involved in nucleating complex assembly. TAF1 forms a promoter DNA binding subcomplex of TFIID, together with TAF7 and TAF2. Contains novel N- and C-terminal Ser/Thr kinase domains which can autophosphorylate or transphosphorylate other transcription factors. Phosphorylates TP53 on 'Thr-55' which leads to MDM2-mediated degradation of TP53. Phosphorylates GTF2A1 and GTF2F1 on Ser residues. Possesses DNA-binding activity. Essential for progression of the G1 phase of the cell cycle. Exhibits histone acetyltransferase activity towards histones H3 and H4. The sequence is that of Transcription initiation factor TFIID subunit 1 from Homo sapiens (Human).